A 115-amino-acid chain; its full sequence is U17-barytoxin-Tl1b (115 aa).

The N-terminal stretch at 1-20 (MKTIIVFLSLLVLATKFGDA) is a signal peptide. Positions 21-74 (KEGVNQKQKKEVTQNEFREEYLNEMAAMSLVQQLEAIERALFENEAGRNSRQKR) are excised as a propeptide. 3 disulfide bridges follow: Cys-75–Cys-89, Cys-82–Cys-94, and Cys-88–Cys-109.

Belongs to the neurotoxin 14 (magi-1) family. 03 (ICK-30-40) subfamily. Expressed by the venom gland.

It is found in the secreted. Its function is as follows. Ion channel inhibitor. The polypeptide is U17-barytoxin-Tl1b (Trittame loki (Brush-footed trapdoor spider)).